The chain runs to 1791 residues: Protein TIC 214 (1791 aa).

6 helical membrane passes run 19 to 39 (IINS…FSIG), 68 to 88 (FIAG…HLAL), 91 to 111 (PHTI…WNNH), 133 to 153 (VFLN…SSML), 176 to 196 (VGWL…LVWI), and 230 to 250 (IFSI…PSPI). The segment covering 257–271 (GTSETEERGGTKQDQ) has biased composition (basic and acidic residues). Disordered stretches follow at residues 257-278 (GTSE…TEEA) and 1498-1521 (ADQG…PNQE).

This sequence belongs to the TIC214 family. Part of the Tic complex.

Its subcellular location is the plastid. It is found in the chloroplast inner membrane. In terms of biological role, involved in protein precursor import into chloroplasts. May be part of an intermediate translocation complex acting as a protein-conducting channel at the inner envelope. The sequence is that of Protein TIC 214 from Aethionema grandiflorum (Persian stone-cress).